The sequence spans 354 residues: Probable mannitol dehydrogenase 1 (354 aa).

Zn(2+)-binding residues include Cys-43, His-65, Cys-96, Cys-99, Cys-102, Cys-110, and Cys-158.

It belongs to the zinc-containing alcohol dehydrogenase family. Zn(2+) serves as cofactor.

It carries out the reaction D-mannitol + NAD(+) = D-mannose + NADH + H(+). Its function is as follows. Oxidizes mannitol to mannose. Provides the initial step by which translocated mannitol is committed to central metabolism and, by regulating mannitol pool size, is important in regulating salt tolerance at the cellular level. This is Probable mannitol dehydrogenase 1 (CAD1) from Stylosanthes humilis (Townsville stylo).